A 693-amino-acid polypeptide reads, in one-letter code: DNA ligase (693 aa).

NAD(+) contacts are provided by residues 45–49, 94–95, and E131; these read DSEYD and SI. Catalysis depends on K133, which acts as the N6-AMP-lysine intermediate. NAD(+) is bound by residues R154, E190, K307, and K331. The Zn(2+) site is built by C429, C432, C447, and C453. One can recognise a BRCT domain in the interval 615 to 693; that stretch reads ASSSKLEGKT…EEGLLSLLAE (79 aa).

This sequence belongs to the NAD-dependent DNA ligase family. LigA subfamily. Mg(2+) is required as a cofactor. Requires Mn(2+) as cofactor.

The enzyme catalyses NAD(+) + (deoxyribonucleotide)n-3'-hydroxyl + 5'-phospho-(deoxyribonucleotide)m = (deoxyribonucleotide)n+m + AMP + beta-nicotinamide D-nucleotide.. DNA ligase that catalyzes the formation of phosphodiester linkages between 5'-phosphoryl and 3'-hydroxyl groups in double-stranded DNA using NAD as a coenzyme and as the energy source for the reaction. It is essential for DNA replication and repair of damaged DNA. The protein is DNA ligase of Methylobacillus flagellatus (strain ATCC 51484 / DSM 6875 / VKM B-1610 / KT).